The chain runs to 830 residues: Ribosome biogenesis protein ERB1 (830 aa).

A disordered region spans residues 1–142 (MAPQPLKVGT…NKDLPVDEKL (142 aa)). Acidic residues-rich tracts occupy residues 35–44 (VSEESDEEFG) and 52–109 (MSDD…DSDS). Over residues 131–142 (EENKDLPVDEKL) the composition is skewed to basic and acidic residues. WD repeat units lie at residues 481-520 (PGDT…EVWR), 523-563 (LHAG…APHI), 660-698 (KTPG…LIRT), 701-740 (SGVK…KPYK), 744-783 (YHNR…DLMQ), and 799-830 (IDGI…LWCS).

Belongs to the WD repeat BOP1/ERB1 family. In terms of assembly, component of the NOP7 complex, composed of ERB1, NOP7 and YTM1. The complex is held together by ERB1, which interacts with NOP7 via its N-terminal domain and with YTM1 via a high-affinity interaction between the seven-bladed beta-propeller domains of the 2 proteins. The NOP7 complex associates with the 66S pre-ribosome.

It is found in the nucleus. It localises to the nucleolus. The protein resides in the nucleoplasm. Component of the NOP7 complex, which is required for maturation of the 25S and 5.8S ribosomal RNAs and formation of the 60S ribosome. The chain is Ribosome biogenesis protein ERB1 from Cryptococcus neoformans var. neoformans serotype D (strain JEC21 / ATCC MYA-565) (Filobasidiella neoformans).